The chain runs to 340 residues: HTH-type transcriptional regulator PtxS (340 aa).

The HTH lacI-type domain occupies 12–67 (VTINQVAEAAGVSKASVSRYIGGDRQLLADATARRIERAIDQLDYRPNQMARGLKR). The segment at residues 14 to 33 (INQVAEAAGVSKASVSRYIG) is a DNA-binding region (H-T-H motif).

As to quaternary structure, interacts with PtxR in the absence of 2-ketogluconate. Binding of the 2-ketogluconate effector to PtxS causes PtxS/PtxR complex dissociation.

2-ketogluconate acts as a molecular effector and causes dissociation of the PtxS/PtxR complex. Its function is as follows. Negatively regulates glucose metabolism by binding directly to the promoter region of the kgu and gad operons. It also negatively regulates its own synthesis. Functionally, in addition, in pathogenic strains, PtxS modulates PtxR activity in response to 2-ketogluconate. In the presence of PtxR, which also binds to the kgu and gad promoter regions, PtxS and PtxR form a tight complex, creating a DNA-loop that prevents RNA polymerase promoter access and expression of the glucose metabolism genes. Binding of the 2-ketogluconate effector to PtxS causes PtxS/PtxR complex dissociation and leads to the dissolution of the repression DNA-loop, facilitating the entry of the RNA polymerase and enabling the transcription of the genes. Also plays an important role in the regulation of the expression of the virulence factor exotoxin A (toxA). PtxS does not bind directly to the toxA promoter but negatively regulates the production of exotoxin A by binding to PtxR and interfering with its positive regulator activity. In the presence of 2-ketogluconate, PtxS is released and PtxR can recruit RNA polymerase. This chain is HTH-type transcriptional regulator PtxS, found in Pseudomonas aeruginosa (strain ATCC 15692 / DSM 22644 / CIP 104116 / JCM 14847 / LMG 12228 / 1C / PRS 101 / PAO1).